A 154-amino-acid chain; its full sequence is UPF0756 membrane protein EAT1b_0668 (154 aa).

A run of 5 helical transmembrane segments spans residues 5-25 (LFLL…VIIA), 52-72 (WGVT…DIGF), 82-102 (PVGI…GQGV), 107-127 (VDPV…GFMK), and 129-149 (IPVG…GYQV).

It belongs to the UPF0756 family.

The protein localises to the cell membrane. The polypeptide is UPF0756 membrane protein EAT1b_0668 (Exiguobacterium sp. (strain ATCC BAA-1283 / AT1b)).